Here is a 311-residue protein sequence, read N- to C-terminus: Energy-coupling factor transporter ATP-binding protein EcfA (311 aa).

Residues 2–237 enclose the ABC transporter domain; the sequence is IELRDLSYSY…AELIRRASLR (236 aa). 35–42 contributes to the ATP binding site; the sequence is GPNGAGKS.

The protein belongs to the ABC transporter superfamily. Energy-coupling factor EcfA family. Forms a stable energy-coupling factor (ECF) transporter complex composed of 2 membrane-embedded substrate-binding proteins (S component), 2 ATP-binding proteins (A component) and 2 transmembrane proteins (T component).

It localises to the cell membrane. Its function is as follows. ATP-binding (A) component of a common energy-coupling factor (ECF) ABC-transporter complex. Unlike classic ABC transporters this ECF transporter provides the energy necessary to transport a number of different substrates. In Methanothermobacter thermautotrophicus (strain ATCC 29096 / DSM 1053 / JCM 10044 / NBRC 100330 / Delta H) (Methanobacterium thermoautotrophicum), this protein is Energy-coupling factor transporter ATP-binding protein EcfA.